The sequence spans 151 residues: Molybdopterin synthase catalytic subunit (151 aa).

Substrate-binding positions include 37–39, 103–104, Lys119, and 126–128; these read KVR, HR, and KRE.

This sequence belongs to the MoaE family. In terms of assembly, heterotetramer of 2 MoaD subunits and 2 MoaE subunits. Also stable as homodimer. The enzyme changes between these two forms during catalysis.

It carries out the reaction 2 [molybdopterin-synthase sulfur-carrier protein]-C-terminal-Gly-aminoethanethioate + cyclic pyranopterin phosphate + H2O = molybdopterin + 2 [molybdopterin-synthase sulfur-carrier protein]-C-terminal Gly-Gly + 2 H(+). It functions in the pathway cofactor biosynthesis; molybdopterin biosynthesis. Functionally, converts molybdopterin precursor Z into molybdopterin. This requires the incorporation of two sulfur atoms into precursor Z to generate a dithiolene group. The sulfur is provided by MoaD. The protein is Molybdopterin synthase catalytic subunit (moaE) of Haemophilus ducreyi (strain 35000HP / ATCC 700724).